A 233-amino-acid polypeptide reads, in one-letter code: 5'-methylthioadenosine/S-adenosylhomocysteine nucleosidase (233 aa).

The Proton acceptor role is filled by E12. Residues G78, I156, and 177–178 (ME) contribute to the substrate site. D201 serves as the catalytic Proton donor.

It belongs to the PNP/UDP phosphorylase family. MtnN subfamily.

The enzyme catalyses S-adenosyl-L-homocysteine + H2O = S-(5-deoxy-D-ribos-5-yl)-L-homocysteine + adenine. It carries out the reaction S-methyl-5'-thioadenosine + H2O = 5-(methylsulfanyl)-D-ribose + adenine. It catalyses the reaction 5'-deoxyadenosine + H2O = 5-deoxy-D-ribose + adenine. It participates in amino-acid biosynthesis; L-methionine biosynthesis via salvage pathway; S-methyl-5-thio-alpha-D-ribose 1-phosphate from S-methyl-5'-thioadenosine (hydrolase route): step 1/2. Functionally, catalyzes the irreversible cleavage of the glycosidic bond in both 5'-methylthioadenosine (MTA) and S-adenosylhomocysteine (SAH/AdoHcy) to adenine and the corresponding thioribose, 5'-methylthioribose and S-ribosylhomocysteine, respectively. Also cleaves 5'-deoxyadenosine, a toxic by-product of radical S-adenosylmethionine (SAM) enzymes, into 5-deoxyribose and adenine. The protein is 5'-methylthioadenosine/S-adenosylhomocysteine nucleosidase of Listeria monocytogenes serovar 1/2a (strain ATCC BAA-679 / EGD-e).